The following is a 324-amino-acid chain: Protein translocase subunit SecF (324 aa).

The next 6 helical transmembrane spans lie at 16-36 (FFWA…ASLV), 145-165 (LIRS…VYIW), 174-194 (LGSV…FALF), 201-221 (TTVA…VVVF), 247-269 (TLSR…LVFG), and 276-295 (FVFA…VYMA).

This sequence belongs to the SecD/SecF family. SecF subfamily. As to quaternary structure, forms a complex with SecD. Part of the essential Sec protein translocation apparatus which comprises SecA, SecYEG and auxiliary proteins SecDF-YajC and YidC.

It is found in the cell inner membrane. Its function is as follows. Part of the Sec protein translocase complex. Interacts with the SecYEG preprotein conducting channel. SecDF uses the proton motive force (PMF) to complete protein translocation after the ATP-dependent function of SecA. This chain is Protein translocase subunit SecF, found in Cereibacter sphaeroides (strain ATCC 17023 / DSM 158 / JCM 6121 / CCUG 31486 / LMG 2827 / NBRC 12203 / NCIMB 8253 / ATH 2.4.1.) (Rhodobacter sphaeroides).